A 450-amino-acid chain; its full sequence is Putative zinc metalloprotease PA3649 (450 aa).

H21 is a binding site for Zn(2+). E22 is a catalytic residue. Residue H25 participates in Zn(2+) binding. The chain crosses the membrane as a helical span at residues 97–119 (IAIVAAGPIANFLLAILFFWVVA). The 93-residue stretch at 199–291 (GWLKGEDNPD…VLDVALELAV (93 aa)) folds into the PDZ domain. Residues 425–444 (AWGMQIGISLVVGVMLLALV) traverse the membrane as a helical segment.

It belongs to the peptidase M50B family. Requires Zn(2+) as cofactor.

The protein localises to the cell inner membrane. This is Putative zinc metalloprotease PA3649 from Pseudomonas aeruginosa (strain ATCC 15692 / DSM 22644 / CIP 104116 / JCM 14847 / LMG 12228 / 1C / PRS 101 / PAO1).